The chain runs to 724 residues: Protein arginine N-methyltransferase 1.6 (724 aa).

SAM-dependent MTase PRMT-type domains lie at 61 to 388 (NDQP…YNLK) and 395 to 721 (HERT…IVTH). Catalysis depends on residues Glu183 and Glu192.

This sequence belongs to the class I-like SAM-binding methyltransferase superfamily. Protein arginine N-methyltransferase family. PRMT7 subfamily.

Functionally, arginine methyltransferase that can both catalyze the formation of omega-N monomethylarginine (MMA) and symmetrical dimethylarginine (sDMA). This chain is Protein arginine N-methyltransferase 1.6 (PRMT16), found in Arabidopsis thaliana (Mouse-ear cress).